We begin with the raw amino-acid sequence, 227 residues long: Cytochrome c oxidase subunit 2 (227 aa).

Residues 1-14 (MAYPFQLGLQDATS) lie on the Mitochondrial intermembrane side of the membrane. The helical transmembrane segment at 15 to 45 (PIMEELLHFHDHTLMIVFLISSLVLYIISLM) threads the bilayer. Residues 46–59 (LTTKLTHTSTMDAQ) are Mitochondrial matrix-facing. A helical transmembrane segment spans residues 60-87 (EVETVWTILPAIILILIALPSLRILYMM). Residues 88 to 227 (DEINNPSLTV…YFETWSALMV (140 aa)) are Mitochondrial intermembrane-facing. Histidine 161, cysteine 196, glutamate 198, cysteine 200, histidine 204, and methionine 207 together coordinate Cu cation. Residue glutamate 198 participates in Mg(2+) binding. Tyrosine 218 is subject to Phosphotyrosine.

Belongs to the cytochrome c oxidase subunit 2 family. In terms of assembly, component of the cytochrome c oxidase (complex IV, CIV), a multisubunit enzyme composed of 14 subunits. The complex is composed of a catalytic core of 3 subunits MT-CO1, MT-CO2 and MT-CO3, encoded in the mitochondrial DNA, and 11 supernumerary subunits COX4I, COX5A, COX5B, COX6A, COX6B, COX6C, COX7A, COX7B, COX7C, COX8 and NDUFA4, which are encoded in the nuclear genome. The complex exists as a monomer or a dimer and forms supercomplexes (SCs) in the inner mitochondrial membrane with NADH-ubiquinone oxidoreductase (complex I, CI) and ubiquinol-cytochrome c oxidoreductase (cytochrome b-c1 complex, complex III, CIII), resulting in different assemblies (supercomplex SCI(1)III(2)IV(1) and megacomplex MCI(2)III(2)IV(2)). Found in a complex with TMEM177, COA6, COX18, COX20, SCO1 and SCO2. Interacts with TMEM177 in a COX20-dependent manner. Interacts with COX20. Interacts with COX16. Cu cation is required as a cofactor.

It is found in the mitochondrion inner membrane. The catalysed reaction is 4 Fe(II)-[cytochrome c] + O2 + 8 H(+)(in) = 4 Fe(III)-[cytochrome c] + 2 H2O + 4 H(+)(out). In terms of biological role, component of the cytochrome c oxidase, the last enzyme in the mitochondrial electron transport chain which drives oxidative phosphorylation. The respiratory chain contains 3 multisubunit complexes succinate dehydrogenase (complex II, CII), ubiquinol-cytochrome c oxidoreductase (cytochrome b-c1 complex, complex III, CIII) and cytochrome c oxidase (complex IV, CIV), that cooperate to transfer electrons derived from NADH and succinate to molecular oxygen, creating an electrochemical gradient over the inner membrane that drives transmembrane transport and the ATP synthase. Cytochrome c oxidase is the component of the respiratory chain that catalyzes the reduction of oxygen to water. Electrons originating from reduced cytochrome c in the intermembrane space (IMS) are transferred via the dinuclear copper A center (CU(A)) of subunit 2 and heme A of subunit 1 to the active site in subunit 1, a binuclear center (BNC) formed by heme A3 and copper B (CU(B)). The BNC reduces molecular oxygen to 2 water molecules using 4 electrons from cytochrome c in the IMS and 4 protons from the mitochondrial matrix. The chain is Cytochrome c oxidase subunit 2 (MT-CO2) from Urocyon cinereoargenteus (Gray fox).